The following is a 98-amino-acid chain: Co-chaperonin GroES 1 (98 aa).

This sequence belongs to the GroES chaperonin family. In terms of assembly, heptamer of 7 subunits arranged in a ring. Interacts with the chaperonin GroEL.

The protein resides in the cytoplasm. Its function is as follows. Together with the chaperonin GroEL, plays an essential role in assisting protein folding. The GroEL-GroES system forms a nano-cage that allows encapsulation of the non-native substrate proteins and provides a physical environment optimized to promote and accelerate protein folding. GroES binds to the apical surface of the GroEL ring, thereby capping the opening of the GroEL channel. The polypeptide is Co-chaperonin GroES 1 (Rhizobium meliloti (strain 1021) (Ensifer meliloti)).